Reading from the N-terminus, the 350-residue chain is Probable arabinogalactan endo-beta-1,4-galactanase A (350 aa).

An N-terminal signal peptide occupies residues 1-16 (MIYSLLLSALPLLSSA). Residue asparagine 128 is glycosylated (N-linked (GlcNAc...) asparagine). Catalysis depends on glutamate 152, which acts as the Proton donor. Glutamate 262 functions as the Nucleophile in the catalytic mechanism.

Belongs to the glycosyl hydrolase 53 family.

Its subcellular location is the secreted. The catalysed reaction is The enzyme specifically hydrolyzes (1-&gt;4)-beta-D-galactosidic linkages in type I arabinogalactans.. Endogalactanase involved in the degradation of plant cell wall polysaccharides, and more particularly of hairy regions of pectin. This chain is Probable arabinogalactan endo-beta-1,4-galactanase A (galA), found in Aspergillus niger (strain ATCC MYA-4892 / CBS 513.88 / FGSC A1513).